A 397-amino-acid chain; its full sequence is Phosphoglycerate kinase (397 aa).

Substrate is bound by residues 25–27, arginine 41, 64–67, arginine 118, and arginine 151; these read DLN and HLGR. ATP contacts are provided by residues lysine 202, glutamate 324, and 350–353; that span reads GGDT.

It belongs to the phosphoglycerate kinase family. As to quaternary structure, monomer.

It is found in the cytoplasm. It catalyses the reaction (2R)-3-phosphoglycerate + ATP = (2R)-3-phospho-glyceroyl phosphate + ADP. The protein operates within carbohydrate degradation; glycolysis; pyruvate from D-glyceraldehyde 3-phosphate: step 2/5. This is Phosphoglycerate kinase from Herminiimonas arsenicoxydans.